We begin with the raw amino-acid sequence, 179 residues long: ATP-dependent protease subunit HslV (179 aa).

Residue T7 is part of the active site. Na(+)-binding residues include A163, C166, and T169.

This sequence belongs to the peptidase T1B family. HslV subfamily. A double ring-shaped homohexamer of HslV is capped on each side by a ring-shaped HslU homohexamer. The assembly of the HslU/HslV complex is dependent on binding of ATP.

The protein resides in the cytoplasm. It carries out the reaction ATP-dependent cleavage of peptide bonds with broad specificity.. With respect to regulation, allosterically activated by HslU binding. In terms of biological role, protease subunit of a proteasome-like degradation complex believed to be a general protein degrading machinery. The protein is ATP-dependent protease subunit HslV of Amoebophilus asiaticus (strain 5a2).